A 465-amino-acid polypeptide reads, in one-letter code: Fumarate hydratase class II (465 aa).

Residues 99–101 (SGT), 130–133 (HPND), 140–142 (STN), and threonine 188 each bind substrate. The Proton donor/acceptor role is filled by histidine 189. Serine 319 is a catalytic residue. Residues serine 320 and 325-327 (KVN) each bind substrate.

The protein belongs to the class-II fumarase/aspartase family. Fumarase subfamily. In terms of assembly, homotetramer.

The protein resides in the cytoplasm. It catalyses the reaction (S)-malate = fumarate + H2O. It functions in the pathway carbohydrate metabolism; tricarboxylic acid cycle; (S)-malate from fumarate: step 1/1. Involved in the TCA cycle. Catalyzes the stereospecific interconversion of fumarate to L-malate. This is Fumarate hydratase class II from Prochlorococcus marinus (strain SARG / CCMP1375 / SS120).